A 267-amino-acid polypeptide reads, in one-letter code: Undecaprenyl-diphosphatase (267 aa).

Transmembrane regions (helical) follow at residues 39–59 (QGLA…ILYF), 87–107 (WMIA…KDFI), 111–131 (LRSA…LWWV), 149–169 (ALFI…RSGA), 189–209 (FLMS…KLVT), 218–238 (ALSI…HAFL), and 244–264 (VGMM…IAFL).

This sequence belongs to the UppP family.

The protein resides in the cell inner membrane. It carries out the reaction di-trans,octa-cis-undecaprenyl diphosphate + H2O = di-trans,octa-cis-undecaprenyl phosphate + phosphate + H(+). Functionally, catalyzes the dephosphorylation of undecaprenyl diphosphate (UPP). Confers resistance to bacitracin. The polypeptide is Undecaprenyl-diphosphatase (Photobacterium profundum (strain SS9)).